The following is a 224-amino-acid chain: Zinc finger protein 22 (224 aa).

The disordered stretch occupies residues 1 to 34 (MRLAKPKAGISRSSSQGKAYENKRKTGRQRQKWG). N6-acetyllysine occurs at positions 18 and 23. S49 bears the Phosphoserine mark. 5 consecutive C2H2-type zinc fingers follow at residues 55–77 (YKCTECEKSFSQSSTLFQHQKIH), 83–105 (HKCADCGKSFFQSSNLIQHRRIH), 111–133 (YKCDECGESFKQSSNLIQHQRIH), 139–161 (YQCDECGRCFSQSSHLIQHQRTH), and 167–189 (YQCSECGKCFSQSSHLRQHMKVH).

The protein belongs to the krueppel C2H2-type zinc-finger protein family. As to expression, in the embryo, expressed in developing craniofacial structures including dental epithelium of maxillary molar tooth organs, tongue epithelium and muscle, and craniofacial bone osteoblasts. In the adult, expressed in mesoderm-derived tissues such as skeletal muscle, heart, kidney and liver. Intermediate expression in spleen, thymus and brain. Low levels in endoderm-derived tissues such as intestine and colon.

The protein localises to the nucleus. In terms of biological role, binds DNA through the consensus sequence 5'-CAATG-3'. May be involved in transcriptional regulation and may play a role in tooth formation. The chain is Zinc finger protein 22 (ZNF22) from Homo sapiens (Human).